A 510-amino-acid chain; its full sequence is Polyamine aminopropyltransferase 2 (510 aa).

The next 6 membrane-spanning stretches (helical) occupy residues 6-26 (ALLVLAVFVVASCGLAYELIA), 38-58 (ILQFSSIIGAYLFAMGIGSWV), 74-94 (LELLVGLFGGVSAAALFLLFA), 102-122 (LVLYALVTVIGVLVGMEIPLV), 140-160 (VLTFDYLGALAVSLLFPLVLA), and 165-185 (LVRTGFLFGLCNTAIAVWTLW). Positions 205–449 (AGMVGAALLA…GEWGFILAAP (245 aa)) constitute a PABS domain. The interval 207 to 456 (MVGAALLAGF…AAPGRADFRP (250 aa)) is spermidine synthase. Gln244 provides a ligand contact to S-methyl-5'-thioadenosine. Residues His274 and Asp298 each coordinate spermidine. S-methyl-5'-thioadenosine-binding positions include Asp318 and 352–353 (DA). Asp370 serves as the catalytic Proton acceptor.

Belongs to the spermidine/spermine synthase family. In terms of assembly, homodimer or homotetramer.

Its subcellular location is the cell membrane. The enzyme catalyses S-adenosyl 3-(methylsulfanyl)propylamine + putrescine = S-methyl-5'-thioadenosine + spermidine + H(+). Its pathway is amine and polyamine biosynthesis; spermidine biosynthesis; spermidine from putrescine: step 1/1. Catalyzes the irreversible transfer of a propylamine group from the amino donor S-adenosylmethioninamine (decarboxy-AdoMet) to putrescine (1,4-diaminobutane) to yield spermidine. The polypeptide is Polyamine aminopropyltransferase 2 (Ralstonia nicotianae (strain ATCC BAA-1114 / GMI1000) (Ralstonia solanacearum)).